We begin with the raw amino-acid sequence, 705 residues long: MSKQRIYEYAKELNLKSKEIIDELKSMNIEVSNHMQALEDDQIKALDKKFKKEQKNDNKQSTQNNHQKSNNQNQNKGQQKDNKKNQQQNNKGNKGNKKNNRNNKKNNKNNKPQSQPAAPKEIPSKVTYQEGITVGEFADKLNVESSEIIKKLFLLGIVANINQSLNQETIELIADDYGVEVEEEVVINEEDLSIYFEDEKDDPEAIERPAVVTIMGHVDHGKTTLLDSIRHTKVTAGEAGGITQHIGAYQIENDGKKITFLDTPGHAAFTTMRARGAQVTDITILVVAADDGVMPQTIEAINHAKEAEVPIIVAVNKIDKPTSNPDRVMQELTEYGLIPEDWGGETIFVPLSALSGDGIDDLLEMIGLVAEVQELKANPKNRAVGTVIEAELDKSRGPSASLLVQNGTLNVGDAIVVGNTYGRIRAMVNDLGQRIKTAGPSTPVEITGINDVPQAGDRFVVFSDEKQARRIGESRHEASIVQQRQESKNVSLDNLFEQMKQGEMKDLNVIIKGDVQGSVEALAASLMKIDVEGVNVRIIHTAVGAINESDVTLANASNGIIIGFNVRPDSGAKRAAEAENVDMRLHRVIYNVIEEIESAMKGLLDPEFEEQVIGQAEVRQTFKVSKVGTIAGCYVTEGKITRNAGVRIIRDGIVQYEGELDTLKRFKDDAKEVAKGYECGITIENYNDLKEGDVIEAFEMVEIKR.

The interval 40–124 is disordered; it reads DDQIKALDKK…QPAAPKEIPS (85 aa). Residues 41 to 58 show a composition bias toward basic and acidic residues; sequence DQIKALDKKFKKEQKNDN. Residues 59–77 are compositionally biased toward low complexity; sequence KQSTQNNHQKSNNQNQNKG. Over residues 94-108 the composition is skewed to basic residues; it reads KGNKKNNRNNKKNNK. The region spanning 207 to 376 is the tr-type G domain; it reads ERPAVVTIMG…GLVAEVQELK (170 aa). Residues 216–223 are G1; that stretch reads GHVDHGKT. 216 to 223 lines the GTP pocket; that stretch reads GHVDHGKT. Residues 241-245 form a G2 region; the sequence is GITQH. Residues 262–265 form a G3 region; sequence DTPG. Residues 262-266 and 316-319 each bind GTP; these read DTPGH and NKID. The segment at 316–319 is G4; the sequence is NKID. The segment at 352–354 is G5; the sequence is SAL.

The protein belongs to the TRAFAC class translation factor GTPase superfamily. Classic translation factor GTPase family. IF-2 subfamily.

The protein localises to the cytoplasm. Functionally, one of the essential components for the initiation of protein synthesis. Protects formylmethionyl-tRNA from spontaneous hydrolysis and promotes its binding to the 30S ribosomal subunits. Also involved in the hydrolysis of GTP during the formation of the 70S ribosomal complex. The polypeptide is Translation initiation factor IF-2 (Staphylococcus aureus (strain MRSA252)).